The chain runs to 213 residues: MQILLAALVAYLIGSVSFAVVVSSVMGLADPRSYGSKNPGATNVLRSGNKKAAILTLVGDAFKGWIAVWLARHFGLPDVAIAWVAIAVFLGHLYPVFFRFQGGKGVATAAGVLLAVHPVLGLATALTWLIVAFFFRYSSLAALVAAVFAPVFDVFLFGMPGHNPIAWAVLAMSVLLVWRHRGNISKLLAGQESRIGDKKKAAADGGAQDGGKA.

5 helical membrane passes run 3–23 (ILLAALVAYLIGSVSFAVVVS), 51–71 (KAAILTLVGDAFKGWIAVWLA), 78–98 (DVAIAWVAIAVFLGHLYPVFF), 115–135 (AVHPVLGLATALTWLIVAFFF), and 140–160 (LAALVAAVFAPVFDVFLFGMP).

It belongs to the PlsY family. As to quaternary structure, probably interacts with PlsX.

Its subcellular location is the cell inner membrane. The enzyme catalyses an acyl phosphate + sn-glycerol 3-phosphate = a 1-acyl-sn-glycero-3-phosphate + phosphate. Its pathway is lipid metabolism; phospholipid metabolism. Its function is as follows. Catalyzes the transfer of an acyl group from acyl-phosphate (acyl-PO(4)) to glycerol-3-phosphate (G3P) to form lysophosphatidic acid (LPA). This enzyme utilizes acyl-phosphate as fatty acyl donor, but not acyl-CoA or acyl-ACP. In Burkholderia cenocepacia (strain HI2424), this protein is Glycerol-3-phosphate acyltransferase.